The chain runs to 148 residues: Large ribosomal subunit protein bL9 (148 aa).

This sequence belongs to the bacterial ribosomal protein bL9 family.

In terms of biological role, binds to the 23S rRNA. The sequence is that of Large ribosomal subunit protein bL9 from Caldicellulosiruptor saccharolyticus (strain ATCC 43494 / DSM 8903 / Tp8T 6331).